Here is a 38-residue protein sequence, read N- to C-terminus: Photosystem II reaction center protein L (38 aa).

The helical transmembrane segment at serine 17–phenylalanine 37 threads the bilayer.

Belongs to the PsbL family. PSII is composed of 1 copy each of membrane proteins PsbA, PsbB, PsbC, PsbD, PsbE, PsbF, PsbH, PsbI, PsbJ, PsbK, PsbL, PsbM, PsbT, PsbX, PsbY, PsbZ, Psb30/Ycf12, at least 3 peripheral proteins of the oxygen-evolving complex and a large number of cofactors. It forms dimeric complexes.

It localises to the plastid. It is found in the chloroplast thylakoid membrane. One of the components of the core complex of photosystem II (PSII). PSII is a light-driven water:plastoquinone oxidoreductase that uses light energy to abstract electrons from H(2)O, generating O(2) and a proton gradient subsequently used for ATP formation. It consists of a core antenna complex that captures photons, and an electron transfer chain that converts photonic excitation into a charge separation. This subunit is found at the monomer-monomer interface and is required for correct PSII assembly and/or dimerization. This chain is Photosystem II reaction center protein L, found in Ostreococcus tauri.